Here is a 267-residue protein sequence, read N- to C-terminus: Glutamate 5-kinase (267 aa).

Lys17 contacts ATP. Substrate-binding residues include Ser57, Asp144, and Asn156. ATP contacts are provided by residues 176 to 177 (SD) and 218 to 224 (TGGMATK).

It belongs to the glutamate 5-kinase family.

It localises to the cytoplasm. It catalyses the reaction L-glutamate + ATP = L-glutamyl 5-phosphate + ADP. The protein operates within amino-acid biosynthesis; L-proline biosynthesis; L-glutamate 5-semialdehyde from L-glutamate: step 1/2. Functionally, catalyzes the transfer of a phosphate group to glutamate to form L-glutamate 5-phosphate. The sequence is that of Glutamate 5-kinase from Clostridium acetobutylicum (strain ATCC 824 / DSM 792 / JCM 1419 / IAM 19013 / LMG 5710 / NBRC 13948 / NRRL B-527 / VKM B-1787 / 2291 / W).